The chain runs to 113 residues: Protein TrbJ (113 aa).

The protein is Protein TrbJ (trbJ) of Escherichia coli (strain K12).